Reading from the N-terminus, the 713-residue chain is Calpastatin (713 aa).

The segment covering Met1 to Ser21 has biased composition (low complexity). The segment at Met1–Gly152 is disordered. The span at Val47 to Gly64 shows a compositional bias: polar residues. Residue Ser57 is modified to Phosphoserine. Lys69 participates in a covalent cross-link: Glycyl lysine isopeptide (Lys-Gly) (interchain with G-Cter in SUMO2). Lys86 carries the post-translational modification N6-acetyllysine. Residues Ser120–Glu129 are compositionally biased toward polar residues. Residues Ser122 and Ser171 each carry the phosphoserine modification. The residue at position 173 (Thr173) is a Phosphothreonine. The stretch at Thr208 to Ser260 is one Inhibitory domain 1 repeat. The segment at Ile253 to Glu402 is disordered. Phosphoserine occurs at positions 260 and 281. Composition is skewed to polar residues over residues Ser275–Lys285, Gly294–Val304, and Gln326–Leu346. An Inhibitory domain 2 repeat occupies Asp341–Pro393. Basic and acidic residues-rich tracts occupy residues Gln351–Cys365 and Tyr376–Lys387. 4 positions are modified to phosphoserine: Ser401, Ser403, Ser410, and Ser445. Residues Leu442 to Gln507 form a disordered region. The span at Thr448 to Glu505 shows a compositional bias: basic and acidic residues. The Inhibitory domain 3 repeat unit spans residues Glu451–Ala504. 2 positions are modified to phosphoserine: Ser521 and Ser532. The span at Val544–Thr558 shows a compositional bias: polar residues. Residues Val544–Thr713 are disordered. 2 positions are modified to phosphoserine: Ser580 and Ser582. The stretch at Pro588–Lys641 is one Inhibitory domain 4 repeat. Basic and acidic residues-rich tracts occupy residues Pro588–Gln648 and Ser687–Thr713.

This sequence belongs to the protease inhibitor I27 (calpastatin) family.

In terms of biological role, specific inhibition of calpain (calcium-dependent cysteine protease). Plays a key role in postmortem tenderization of meat and have been proposed to be involved in muscle protein degradation in living tissue. The protein is Calpastatin (Cast) of Rattus norvegicus (Rat).